Consider the following 471-residue polypeptide: Probable nucleoredoxin 3 (471 aa).

Thioredoxin domains are found at residues 15–173 (VSIP…ARRQ) and 179–334 (QLLG…KERD).

The protein belongs to the nucleoredoxin family.

It catalyses the reaction [protein]-dithiol + NAD(+) = [protein]-disulfide + NADH + H(+). The catalysed reaction is [protein]-dithiol + NADP(+) = [protein]-disulfide + NADPH + H(+). Probable thiol-disulfide oxidoreductase that may participate in various redox reactions. In Oryza sativa subsp. japonica (Rice), this protein is Probable nucleoredoxin 3.